The primary structure comprises 431 residues: MPLPDLLPIAPFTRPVRGEVTLPGSKSLTNRALLLAALCDHPVVLTGALFSEDTQLMVAALRRLGLTVFANEPARTLAVSDQASAFQAKAPVDLFVGLAGTAARFLTALCAAAPRGVYRIDGVSQMRKRPMRGLIDALRALGAEVRCTEREGFFPLEIHARGLRGGPVEIDASESSQLLSALLMVAPLARAATQITLTSDVRWTFVEMTFRLMAEFGVRIDHAGSSTTFEMKAGRYSAPSRYAIEPDATAASYFQALPLVVGGTLALPGLRPPGDGLQGDSAFVDVLARVRARAAGQLLEENFHEISDTFLTLAAITPLLAGPTRITGIAHTRQQETDRVAGMARELMQLGQRVVETRGELEIHPQPLRLGETIETYGDHRFAMSFAILGCRDVRGDGRPWLSIRDPACCAKTFPNFFELLATLRQKSLAD.

The 3-phosphoshikimate site is built by lysine 26, serine 27, and arginine 31. Lysine 26 is a binding site for phosphoenolpyruvate. Glycine 100 and arginine 129 together coordinate phosphoenolpyruvate. Residues serine 175, serine 176, glutamine 177, aspartate 308, and glutamine 335 each contribute to the 3-phosphoshikimate site. Glutamine 177 is a binding site for phosphoenolpyruvate. Catalysis depends on aspartate 308, which acts as the Proton acceptor. Phosphoenolpyruvate is bound by residues arginine 339, arginine 381, and lysine 412.

This sequence belongs to the EPSP synthase family. In terms of assembly, monomer.

The protein resides in the cytoplasm. It catalyses the reaction 3-phosphoshikimate + phosphoenolpyruvate = 5-O-(1-carboxyvinyl)-3-phosphoshikimate + phosphate. Its pathway is metabolic intermediate biosynthesis; chorismate biosynthesis; chorismate from D-erythrose 4-phosphate and phosphoenolpyruvate: step 6/7. Catalyzes the transfer of the enolpyruvyl moiety of phosphoenolpyruvate (PEP) to the 5-hydroxyl of shikimate-3-phosphate (S3P) to produce enolpyruvyl shikimate-3-phosphate and inorganic phosphate. The polypeptide is 3-phosphoshikimate 1-carboxyvinyltransferase (Opitutus terrae (strain DSM 11246 / JCM 15787 / PB90-1)).